Consider the following 633-residue polypeptide: DNA mismatch repair protein MutL (633 aa).

Disordered regions lie at residues 337-364 and 383-405; these read RPDD…GEFG and VGWS…TRPE. The segment covering 385–396 has biased composition (gly residues); sequence WSGGSSASGGSS.

The protein belongs to the DNA mismatch repair MutL/HexB family.

This protein is involved in the repair of mismatches in DNA. It is required for dam-dependent methyl-directed DNA mismatch repair. May act as a 'molecular matchmaker', a protein that promotes the formation of a stable complex between two or more DNA-binding proteins in an ATP-dependent manner without itself being part of a final effector complex. This chain is DNA mismatch repair protein MutL, found in Pseudomonas aeruginosa (strain UCBPP-PA14).